The following is a 42-amino-acid chain: MSNVGTSGRIPLWLVGTVAGILVLGLVGLFFYGSYVGLGSSL.

A helical membrane pass occupies residues 10–30 (IPLWLVGTVAGILVLGLVGLF).

It belongs to the PsbJ family. As to quaternary structure, PSII is composed of 1 copy each of membrane proteins PsbA, PsbB, PsbC, PsbD, PsbE, PsbF, PsbH, PsbI, PsbJ, PsbK, PsbL, PsbM, PsbT, PsbX, PsbY, PsbZ, Psb30/Ycf12, at least 3 peripheral proteins of the oxygen-evolving complex and a large number of cofactors. It forms dimeric complexes.

Its subcellular location is the plastid. It is found in the chloroplast thylakoid membrane. Its function is as follows. One of the components of the core complex of photosystem II (PSII). PSII is a light-driven water:plastoquinone oxidoreductase that uses light energy to abstract electrons from H(2)O, generating O(2) and a proton gradient subsequently used for ATP formation. It consists of a core antenna complex that captures photons, and an electron transfer chain that converts photonic excitation into a charge separation. The chain is Photosystem II reaction center protein J from Staurastrum punctulatum (Green alga).